A 317-amino-acid chain; its full sequence is Beta-ketoacyl-[acyl-carrier-protein] synthase III (317 aa).

Active-site residues include cysteine 112 and histidine 244. Positions 245-249 are ACP-binding; that stretch reads QANLR. Asparagine 274 is a catalytic residue.

The protein belongs to the thiolase-like superfamily. FabH family. In terms of assembly, homodimer.

It localises to the cytoplasm. It carries out the reaction malonyl-[ACP] + acetyl-CoA + H(+) = 3-oxobutanoyl-[ACP] + CO2 + CoA. Its pathway is lipid metabolism; fatty acid biosynthesis. Catalyzes the condensation reaction of fatty acid synthesis by the addition to an acyl acceptor of two carbons from malonyl-ACP. Catalyzes the first condensation reaction which initiates fatty acid synthesis and may therefore play a role in governing the total rate of fatty acid production. Possesses both acetoacetyl-ACP synthase and acetyl transacylase activities. Its substrate specificity determines the biosynthesis of branched-chain and/or straight-chain of fatty acids. This is Beta-ketoacyl-[acyl-carrier-protein] synthase III from Escherichia coli O9:H4 (strain HS).